The sequence spans 727 residues: Telomere repeats-binding bouquet formation protein 1 (727 aa).

2 ARM repeats span residues 101–144 (ELFE…RETG) and 339–382 (NGLP…GEYP). Residues 398 to 446 (ENNLEEHWRKAKEILHRIEQLEREGNEEEIQRENYQDNISSMNISIQNT) are a coiled coil. Residues 457–468 (RGSKAEDEDKSH) are compositionally biased toward basic and acidic residues. The disordered stretch occupies residues 457–493 (RGSKAEDEDKSHSRQLQSYKSHGVMSKACTNDDQMKT). An interaction with TERF1 region spans residues 523–662 (QNLHEETTFE…QRLSNESTTP (140 aa)). The residue at position 648 (threonine 648) is a Phosphothreonine. In terms of domain architecture, Myb-like spans 666–719 (KKRRIRKNFTEEEVNYLFNGVKKMGNHWNSILWSFPFQQGRKAVDLAHKYHKLT).

Belongs to the TERB1 family. As to quaternary structure, component of the MAJIN-TERB1-TERB2 complex, composed of MAJIN, TERB1 and TERB2. Interacts with TERF1, STAG3 and SUN1. Interacts (via Myb-like domain) with the cohesin complex; probably mediated via interaction with STAG3. Phosphorylated by CDK. Phosphorylation by CDK takes place in late prophase when the cap exchange is prominent. is important for the stabilization of telomere attachment but dispenable for the cap exchange.

Its subcellular location is the chromosome. It is found in the telomere. The protein localises to the nucleus inner membrane. Functionally, meiosis-specific telomere-associated protein involved in meiotic telomere attachment to the nucleus inner membrane, a crucial step for homologous pairing and synapsis. Component of the MAJIN-TERB1-TERB2 complex, which promotes telomere cap exchange by mediating attachment of telomeric DNA to the inner nuclear membrane and replacement of the protective cap of telomeric chromosomes: in early meiosis, the MAJIN-TERB1-TERB2 complex associates with telomeric DNA and the shelterin/telosome complex. During prophase, the complex matures and promotes release of the shelterin/telosome complex from telomeric DNA. In the MAJIN-TERB1-TERB2 complex, TERB1 probably mediates association with the shelterin/telosome complex via interaction with TERF1, promoting priming telomeric DNA attachment'. Promotes telomere association with the nuclear envelope and deposition of the SUN-KASH/LINC complex. Also recruits cohesin to telomeres to develop structural rigidity. The sequence is that of Telomere repeats-binding bouquet formation protein 1 from Homo sapiens (Human).